A 319-amino-acid polypeptide reads, in one-letter code: ATP-dependent 6-phosphofructokinase (319 aa).

G11 is an ATP binding site. 21-25 (RAVTR) provides a ligand contact to ADP. ATP is bound by residues 72 to 73 (RF) and 102 to 105 (GDGS). A Mg(2+)-binding site is contributed by D103. 125 to 127 (SID) lines the substrate pocket. Residue D127 is the Proton acceptor of the active site. ADP is bound at residue R154. Residues R162 and 169 to 171 (MGR) each bind substrate. ADP-binding positions include 185-187 (GAD) and 213-215 (KKH). Substrate is bound by residues E222, R243, and 249–252 (HMQR).

It belongs to the phosphofructokinase type A (PFKA) family. ATP-dependent PFK group I subfamily. Prokaryotic clade 'B1' sub-subfamily. In terms of assembly, homotetramer. Requires Mg(2+) as cofactor.

It is found in the cytoplasm. The catalysed reaction is beta-D-fructose 6-phosphate + ATP = beta-D-fructose 1,6-bisphosphate + ADP + H(+). It functions in the pathway carbohydrate degradation; glycolysis; D-glyceraldehyde 3-phosphate and glycerone phosphate from D-glucose: step 3/4. Allosterically activated by ADP and other diphosphonucleosides, and allosterically inhibited by phosphoenolpyruvate. Catalyzes the phosphorylation of D-fructose 6-phosphate to fructose 1,6-bisphosphate by ATP, the first committing step of glycolysis. This is ATP-dependent 6-phosphofructokinase from Lactobacillus gasseri (strain ATCC 33323 / DSM 20243 / BCRC 14619 / CIP 102991 / JCM 1131 / KCTC 3163 / NCIMB 11718 / NCTC 13722 / AM63).